A 494-amino-acid chain; its full sequence is Neuronal acetylcholine receptor subunit alpha-6 (494 aa).

Residues M1–G30 form the signal peptide. Over C31–P240 the chain is Extracellular. N-linked (GlcNAc...) asparagine glycans are attached at residues N54 and N171. Cystine bridges form between C158–C172 and C222–C223. 3 helical membrane-spanning segments follow: residues M241–P265, V272–T290, and Y306–I327. Residues H328 to R465 lie on the Cytoplasmic side of the membrane. Positions Q399–S423 are disordered. S401 bears the Phosphoserine mark. A helical transmembrane segment spans residues V466–Q485.

This sequence belongs to the ligand-gated ion channel (TC 1.A.9) family. Acetylcholine receptor (TC 1.A.9.1) subfamily. Alpha-6/CHRNA6 sub-subfamily. In terms of assembly, neuronal AChR is composed of two different types of subunits: alpha and non-alpha (beta). CHRNA6/alpha-6 subunit can be combined to CHRNB2/beta-2 and CHRNA4/alpha-4 to give rise to functional receptors. Interacts with LYPD6. Predominantly expressed in only a few brain areas, including dopaminergic neurons, norepirephrine neurons and cells of the visual system.

It localises to the synaptic cell membrane. It catalyses the reaction K(+)(in) = K(+)(out). It carries out the reaction Na(+)(in) = Na(+)(out). The catalysed reaction is Ca(2+)(in) = Ca(2+)(out). Activated by a myriad of ligands such as acetylcholine, cytisine and nicotine. CHRNA6 nAChR activity is inhibited by the antagonists alpha-conotoxin MII and PIA, a small disulfide-constrained peptides from cone snails. Component of neuronal acetylcholine receptors (nAChRs) that function as pentameric, ligand-gated cation channels with high calcium permeability among other activities. nAChRs are excitatory neurotrasnmitter receptors formed by a collection of nAChR subunits known to mediate synaptic transmission in the nervous system and the neuromuscular junction. Each nAchR subunit confers differential attributes to channel properties, including activation, deactivation and desensitization kinetics, pH sensitivity, cation permeability, and binding to allosteric modulators. CHRNA6 forms pentameric channels with CHRNB2 and CHRNA4 that exhibit high sensitivity to ACh and nicotine and are predominantly expressed in only a few brain areas, including dopaminergic neurons, norepirephrine neurons and cells of the visual system. nAChrs containing CHRNA6 subunits mediate endogenous cholinergic modulation of dopamine and gamma-aminobutyric acid (GABA) release in response to nicotine at nerve terminals. The sequence is that of Neuronal acetylcholine receptor subunit alpha-6 (Chrna6) from Mus musculus (Mouse).